The chain runs to 89 residues: Small ribosomal subunit protein uS15 (89 aa).

This sequence belongs to the universal ribosomal protein uS15 family. In terms of assembly, part of the 30S ribosomal subunit. Forms a bridge to the 50S subunit in the 70S ribosome, contacting the 23S rRNA.

Functionally, one of the primary rRNA binding proteins, it binds directly to 16S rRNA where it helps nucleate assembly of the platform of the 30S subunit by binding and bridging several RNA helices of the 16S rRNA. Forms an intersubunit bridge (bridge B4) with the 23S rRNA of the 50S subunit in the ribosome. The sequence is that of Small ribosomal subunit protein uS15 from Prosthecochloris aestuarii (strain DSM 271 / SK 413).